The chain runs to 447 residues: Alliin lyase (447 aa).

A propeptide spanning residues 1 to 2 (QA) is cleaved from the precursor. Residues 15 to 61 (EAVANINCSGHGRAFLDGILSDGSPKCECNTCYTGADCSQKITGCSA) enclose the EGF-like; atypical domain. N-linked (GlcNAc...) asparagine glycosylation is present at asparagine 21. Cystine bridges form between cysteine 22/cysteine 41, cysteine 43/cysteine 52, and cysteine 46/cysteine 59. 94–102 (YFFNPVSNF) lines the chloride pocket. 2 N-linked (GlcNAc...) asparagine glycosylation sites follow: asparagine 148 and asparagine 193. An N6-(pyridoxal phosphate)lysine modification is found at lysine 253. Asparagine 330 is a glycosylation site (N-linked (GlcNAc...) asparagine). Cysteines 370 and 378 form a disulfide.

Belongs to the alliinase family. As to quaternary structure, homodimer. Requires pyridoxal 5'-phosphate as cofactor.

The protein localises to the vacuole. It carries out the reaction an S-alkyl-L-cysteine S-oxide = an S-alkyl sulfenate + 2-aminoprop-2-enoate. The protein is Alliin lyase of Allium cepa var. aggregatum (Shallot).